Reading from the N-terminus, the 200-residue chain is Superoxide dismutase [Fe] (200 aa).

Fe cation contacts are provided by His28, His80, Asp162, and His166.

Belongs to the iron/manganese superoxide dismutase family. Homodimer. It depends on Fe cation as a cofactor.

The catalysed reaction is 2 superoxide + 2 H(+) = H2O2 + O2. Functionally, destroys superoxide anion radicals which are normally produced within the cells and which are toxic to biological systems. The sequence is that of Superoxide dismutase [Fe] (sodB) from Nostoc sp. (strain PCC 7120 / SAG 25.82 / UTEX 2576).